Reading from the N-terminus, the 710-residue chain is Phosphoribosylformylglycinamidine synthase subunit PurL (710 aa).

H36 is a catalytic residue. Residues Y39 and K80 each coordinate ATP. E82 is a Mg(2+) binding site. Substrate-binding positions include 83–86 (SHNH) and R105. Catalysis depends on H84, which acts as the Proton acceptor. D106 provides a ligand contact to Mg(2+). A substrate-binding site is contributed by Q226. D252 contacts Mg(2+). 294-296 (ETQ) contacts substrate. Positions 470 and 507 each coordinate ATP. S510 contacts substrate.

Belongs to the FGAMS family. Monomer. Part of the FGAM synthase complex composed of 1 PurL, 1 PurQ and 2 PurS subunits.

The protein resides in the cytoplasm. The enzyme catalyses N(2)-formyl-N(1)-(5-phospho-beta-D-ribosyl)glycinamide + L-glutamine + ATP + H2O = 2-formamido-N(1)-(5-O-phospho-beta-D-ribosyl)acetamidine + L-glutamate + ADP + phosphate + H(+). It functions in the pathway purine metabolism; IMP biosynthesis via de novo pathway; 5-amino-1-(5-phospho-D-ribosyl)imidazole from N(2)-formyl-N(1)-(5-phospho-D-ribosyl)glycinamide: step 1/2. Functionally, part of the phosphoribosylformylglycinamidine synthase complex involved in the purines biosynthetic pathway. Catalyzes the ATP-dependent conversion of formylglycinamide ribonucleotide (FGAR) and glutamine to yield formylglycinamidine ribonucleotide (FGAM) and glutamate. The FGAM synthase complex is composed of three subunits. PurQ produces an ammonia molecule by converting glutamine to glutamate. PurL transfers the ammonia molecule to FGAR to form FGAM in an ATP-dependent manner. PurS interacts with PurQ and PurL and is thought to assist in the transfer of the ammonia molecule from PurQ to PurL. This is Phosphoribosylformylglycinamidine synthase subunit PurL from Sulfolobus acidocaldarius (strain ATCC 33909 / DSM 639 / JCM 8929 / NBRC 15157 / NCIMB 11770).